Here is a 326-residue protein sequence, read N- to C-terminus: dTDP-4-dehydro-6-deoxy-D-allose reductase (326 aa).

NAD(+) contacts are provided by residues 15–21 and 129–132; these read GALGFIG and MSSS. The active-site Proton donor/acceptor is the Y160. NAD(+) contacts are provided by residues K164 and 187-190; that span reads PGNV.

Belongs to the NAD(P)-dependent epimerase/dehydratase family.

The catalysed reaction is dTDP-6-deoxy-alpha-D-allose + NAD(+) = dTDP-4-dehydro-6-deoxy-alpha-D-allose + NADH + H(+). It carries out the reaction dTDP-6-deoxy-alpha-D-allose + NADP(+) = dTDP-4-dehydro-6-deoxy-alpha-D-allose + NADPH + H(+). In terms of biological role, catalyzes the stereospecific reduction of the C-4 keto group of dTDP-4-dehydro-6-deoxy-D-allose, leading to dTDP-6-deoxy-D-allose, an intermediate in the biosynthesis of the mycinose moiety of dihydrochalcomycin (GERI-155) antibiotic. Cannot directly reduce dTDP-4-dehydro-6-deoxyglucose, and thus acts after the epimerization step catalyzed by GerF. The protein is dTDP-4-dehydro-6-deoxy-D-allose reductase (gerKI) of Streptomyces sp.